Reading from the N-terminus, the 206-residue chain is Eukaryotic translation initiation factor isoform 4E-2 (206 aa).

Cys103 and Cys142 are oxidised to a cystine.

The protein belongs to the eukaryotic initiation factor 4E family. EIF4F is a multi-subunit complex, the composition of which varies with external and internal environmental conditions. It is composed of at least EIF4A, EIF4E and EIF4G. EIF4E is also known to interact with other partners. In higher plants two isoforms of EIF4F have been identified, named isoform EIF4F and isoform EIF(iso)4F. Isoform EIF4F has subunits p220 and p26, whereas isoform EIF(iso)4F has subunits p82 and p28. In terms of processing, according to the redox status, the Cys-103-Cys-142 disulfide bridge may have a role in regulating protein function by affecting its ability to bind capped mRNA.

Functionally, recognizes and binds the 7-methylguanosine-containing mRNA cap during an early step in the initiation of protein synthesis and facilitates ribosome binding by inducing the unwinding of the mRNAs secondary structures. This is Eukaryotic translation initiation factor isoform 4E-2 from Oryza sativa subsp. japonica (Rice).